Reading from the N-terminus, the 519-residue chain is Apolipoprotein N-acyltransferase (519 aa).

The next 6 helical transmembrane spans lie at 6-26 (APLGWTYVAWFGQIPLWIWIF), 47-67 (LTAIAWGGGFYGVALFWITGV), 83-103 (IAAFCWLAITAWGVVLVFVWL), 126-146 (LFILWGTASWCGLETLWSHSI), 174-194 (LLSAFIVAVNGFLALGLIDFL), and 206-226 (WHYFLIAILIWLFCQGGGWLL). In terms of domain architecture, CN hydrolase spans 244–482 (IQGNIPNQIK…YEIHAAPIYR (239 aa)). Residue E285 is the Proton acceptor of the active site. Residue K343 is part of the active site. C394 acts as the Nucleophile in catalysis. Residues 496-516 (VVFLLLVVSAIAWLYQIVFPL) form a helical membrane-spanning segment.

It belongs to the CN hydrolase family. Apolipoprotein N-acyltransferase subfamily.

It localises to the cell inner membrane. The enzyme catalyses N-terminal S-1,2-diacyl-sn-glyceryl-L-cysteinyl-[lipoprotein] + a glycerophospholipid = N-acyl-S-1,2-diacyl-sn-glyceryl-L-cysteinyl-[lipoprotein] + a 2-acyl-sn-glycero-3-phospholipid + H(+). It participates in protein modification; lipoprotein biosynthesis (N-acyl transfer). Functionally, catalyzes the phospholipid dependent N-acylation of the N-terminal cysteine of apolipoprotein, the last step in lipoprotein maturation. In Synechocystis sp. (strain ATCC 27184 / PCC 6803 / Kazusa), this protein is Apolipoprotein N-acyltransferase.